The sequence spans 213 residues: MANQSEKIPRATLKRLPLYYRFVNTLKSKGIDRVNSKAISEGLNIDSATIRRDFSYFGELGKKGYGYNIDSLLHFFKNEISENDEIKIAIVGVGNLGKALLTYNFSIHDEMTITEAFDIREEVIGTQIGKVTVSPFEKITDILSHEQIDVVILTTPEEAAQKVADTLVKAGVKGILNFTPSRVQTPSDVQVHHIDLGIELQSLLFFMKNYSHK.

The segment at residues 18-57 is a DNA-binding region (H-T-H motif); that stretch reads LYYRFVNTLKSKGIDRVNSKAISEGLNIDSATIRRDFSYF. 92-97 provides a ligand contact to NAD(+); sequence GVGNLG.

The protein belongs to the transcriptional regulatory Rex family. In terms of assembly, homodimer.

It is found in the cytoplasm. Its function is as follows. Modulates transcription in response to changes in cellular NADH/NAD(+) redox state. The polypeptide is Redox-sensing transcriptional repressor Rex (Staphylococcus saprophyticus subsp. saprophyticus (strain ATCC 15305 / DSM 20229 / NCIMB 8711 / NCTC 7292 / S-41)).